We begin with the raw amino-acid sequence, 827 residues long: MDNQNNNNALANGDSQFTMPKVIDYLQNEWLKFEVDRAHWISEKAELTNRILKLESERKLFESHKFDLCRRVKMLEYALQQERLKNNSLLQQQQKVIEKVEEEEEEDDKIPKNREPPKKSKDNTTRLIIRKYLREMGYNDLIVSKSLQTEFENDSQNIDNDTTNTIDDTNDTTVKTILNLKDINNNNSNNNNKNQTTTTTTTSPSPSPSPSTSTSTSTSSNKTDNTTTTTTNGNGYNSNTIISPPSSSSSSSSSSSSSSSQSQPQPQLQSSLSELINNTTDLSQSLDSLSSASSGYEYDSLLDNLKQLDNSSVSSNSGNNSINSSSDSLDTSKQSQEDPNNVTISKQQQQEQQQQQESDEQSFNSFNEDIFNKLTANSKGRMKIKGLGNLKNYKKEHMGEEGNLSLPDQNTEEKSTPTTKSSSSSSSSSTGSTRKKKSSSSSSSGSSSSNSNTMNSELMGLGASDLNDITLDDGSKGGNDSAAPRVWKFKHSLKSHFDGVRSIQFHPNEPIMISASEDNSIKVWNLNHLVPTKKSPSPEIEPLYTIRGHTGPVFTSEWNQINGEYSNYQSFFSAGYDMIIRQWSLPSSDIDSYLQHGKILPYLEKEFIGGHQDGIWDLLSIPNTPNLLSSSADGTVSLWNTTTSEQLYTLQHSNGLSYIPTSIALPATENNRKLLTSYNDGSILLFDLETQQIISQLKQGSSNNNNNNNNNSQINKIVSHPFMPLAMTGSEDHKIEFFDLNSNTVVHSMIAHSNSISSLTIDPSGLYIASCAHDSSIRFWDISSKTCIQDLNSHRPKYDESIHCIKYHPNKGYFASGGADSVIRILN.

The stretch at 37–109 (RAHWISEKAE…VEEEEEEDDK (73 aa)) forms a coiled coil. 4 disordered regions span residues 99 to 123 (KVEEEEEEDDKIPKNREPPKKSKDN), 181 to 270 (KDIN…QLQS), 311 to 362 (SSVS…DEQS), and 400 to 459 (EEGN…SELM). Positions 109 to 123 (KIPKNREPPKKSKDN) are enriched in basic and acidic residues. 2 stretches are compositionally biased toward low complexity: residues 184–270 (NNNN…QLQS) and 311–334 (SSVSSNSGNNSINSSSDSLDTSKQ). Positions 337 to 346 (EDPNNVTISK) are enriched in polar residues. Composition is skewed to low complexity over residues 347–356 (QQQQEQQQQQ), 416–432 (TPTTKSSSSSSSSSTGS), and 439–453 (SSSSSSGSSSSNSNT). WD repeat units follow at residues 495–534 (SHFDGVRSIQFHPNEPIMISASEDNSIKVWNLNHLVPTKK), 548–593 (GHTG…IDSY), 610–649 (GHQDGIWDLLSIPNTPNLLSSSADGTVSLWNTTTSEQLYT), 709–748 (NNNSQINKIVSHPFMPLAMTGSEDHKIEFFDLNSNTVVHS), 751–790 (AHSNSISSLTIDPSGLYIASCAHDSSIRFWDISSKTCIQD), and 797–827 (KYDESIHCIKYHPNKGYFASGGADSVIRILN).

The protein belongs to the WD repeat striatin family. As to quaternary structure, part of the core of STRIPAK complexes.

It localises to the cytoplasm. It is found in the membrane. Functionally, calmodulin-binding scaffolding protein which is the center of the striatin-interacting phosphatase and kinase (STRIPAK) complexes. STRIPAK complexes have critical roles in protein (de)phosphorylation and are regulators of multiple signaling pathways including Hippo, MAPK, nuclear receptor and cytoskeleton remodeling. Different types of STRIPAK complexes are involved in a variety of biological processes such as cell growth, differentiation, apoptosis, metabolism and immune regulation. This is Striatin homolog (strn) from Dictyostelium discoideum (Social amoeba).